A 416-amino-acid chain; its full sequence is Alpha-1-antiproteinase (416 aa).

The N-terminal stretch at 1–24 (MALSITRGLLLLAALCCLAPISLA) is a signal peptide. 4 N-linked (GlcNAc...) asparagine glycosylation sites follow: Asn68, Asn105, Asn143, and Asn269. The RCL stretch occupies residues 371–390 (GSTFLEAIPMSLPPDVEFNR). At Ser381 the chain carries Phosphoserine.

It belongs to the serpin family. In terms of assembly, interacts with CELA2A. Interacts with ERGIC3 and LMAN1/ERGIC53. Interacts with PRSS1/Trypsin. In terms of tissue distribution, plasma.

The protein resides in the secreted. Inhibitor of serine proteases. Its primary target is elastase, but it also has a moderate affinity for plasmin and thrombin. Inhibits trypsin, chymotrypsin and plasminogen activator. The polypeptide is Alpha-1-antiproteinase (SERPINA1) (Bos taurus (Bovine)).